Here is a 171-residue protein sequence, read N- to C-terminus: Endoribonuclease YbeY (171 aa).

Residues H126, H130, and H136 each contribute to the Zn(2+) site.

It belongs to the endoribonuclease YbeY family. The cofactor is Zn(2+).

The protein resides in the cytoplasm. Its function is as follows. Single strand-specific metallo-endoribonuclease involved in late-stage 70S ribosome quality control and in maturation of the 3' terminus of the 16S rRNA. The protein is Endoribonuclease YbeY of Rhizobium johnstonii (strain DSM 114642 / LMG 32736 / 3841) (Rhizobium leguminosarum bv. viciae).